Reading from the N-terminus, the 119-residue chain is Ribonuclease P protein component (119 aa).

The protein belongs to the RnpA family. Consists of a catalytic RNA component (M1 or rnpB) and a protein subunit.

It catalyses the reaction Endonucleolytic cleavage of RNA, removing 5'-extranucleotides from tRNA precursor.. In terms of biological role, RNaseP catalyzes the removal of the 5'-leader sequence from pre-tRNA to produce the mature 5'-terminus. It can also cleave other RNA substrates such as 4.5S RNA. The protein component plays an auxiliary but essential role in vivo by binding to the 5'-leader sequence and broadening the substrate specificity of the ribozyme. This chain is Ribonuclease P protein component, found in Dictyoglomus turgidum (strain DSM 6724 / Z-1310).